The primary structure comprises 94 residues: Large ribosomal subunit protein bL27 (94 aa).

Residues 1-9 (MTLNNLQLF) constitute a propeptide that is removed on maturation. A disordered region spans residues 9-33 (FAHKKGGGSTSNGRDSQAKRLGAKA).

It belongs to the bacterial ribosomal protein bL27 family. In terms of processing, the N-terminus is cleaved by ribosomal processing cysteine protease Prp.

The sequence is that of Large ribosomal subunit protein bL27 from Streptococcus pneumoniae serotype 4 (strain ATCC BAA-334 / TIGR4).